Consider the following 291-residue polypeptide: Ribose-phosphate pyrophosphokinase (291 aa).

ATP contacts are provided by residues 34 to 36 (DGE) and 93 to 94 (RQ). Mg(2+) is bound by residues His-127 and Asp-165. Residue Lys-188 is part of the active site. Residues Arg-190, Asp-216, and 220–224 (STGGT) each bind D-ribose 5-phosphate.

It belongs to the ribose-phosphate pyrophosphokinase family. Class III (archaeal) subfamily. It depends on Mg(2+) as a cofactor.

It localises to the cytoplasm. The catalysed reaction is D-ribose 5-phosphate + ATP = 5-phospho-alpha-D-ribose 1-diphosphate + AMP + H(+). Its pathway is metabolic intermediate biosynthesis; 5-phospho-alpha-D-ribose 1-diphosphate biosynthesis; 5-phospho-alpha-D-ribose 1-diphosphate from D-ribose 5-phosphate (route I): step 1/1. In terms of biological role, involved in the biosynthesis of the central metabolite phospho-alpha-D-ribosyl-1-pyrophosphate (PRPP) via the transfer of pyrophosphoryl group from ATP to 1-hydroxyl of ribose-5-phosphate (Rib-5-P). The protein is Ribose-phosphate pyrophosphokinase of Sulfolobus acidocaldarius (strain ATCC 33909 / DSM 639 / JCM 8929 / NBRC 15157 / NCIMB 11770).